A 651-amino-acid chain; its full sequence is Mitogen-activated protein kinase kinase kinase 2 (651 aa).

One can recognise a Protein kinase domain in the interval 68–330; sequence WRKGQLIGRG…ASELLKHPFV (263 aa). Residues 74–82 and Lys-97 contribute to the ATP site; that span reads IGRGAFGTV. The stretch at 105-130 forms a coiled coil; it reads CASKEKTQAHIQELEEEVKLLKNLSH. Residues Lys-108 and Lys-110 each participate in a glycyl lysine isopeptide (Lys-Gly) (interchain with G-Cter in ubiquitin) cross-link. Catalysis depends on Asp-196, which acts as the Proton acceptor. Disordered stretches follow at residues 460–483, 537–601, and 618–651; these read GNGE…DENE, RGFL…VALS, and KRRE…SPGK. Residues 464–477 show a composition bias toward basic and acidic residues; that stretch reads TETKVSMEVDHPSY. A compositionally biased stretch (polar residues) spans 570 to 599; the sequence is SPESGNSSGAPKNSNASAGAEQESNSQSVA. Residues 605-628 are a coiled coil; that stretch reads RKWKEELDQELERKRREITRQAGM.

Belongs to the protein kinase superfamily. STE Ser/Thr protein kinase family. MAP kinase kinase kinase subfamily. Expressed in roots and flowers.

The protein resides in the cytoplasm. It is found in the cytoskeleton. It carries out the reaction L-seryl-[protein] + ATP = O-phospho-L-seryl-[protein] + ADP + H(+). The catalysed reaction is L-threonyl-[protein] + ATP = O-phospho-L-threonyl-[protein] + ADP + H(+). Functionally, involved in cortical microtubules organization and stabilization by regulating the phosphorylation state of microtubule-associated proteins such as MAP65-1. This is Mitogen-activated protein kinase kinase kinase 2 (ANP2) from Arabidopsis thaliana (Mouse-ear cress).